Here is a 226-residue protein sequence, read N- to C-terminus: Histone H1.5 (226 aa).

The span at 1-16 shows a compositional bias: low complexity; sequence MSETAPAETATPAPVE. A disordered region spans residues 1–44; it reads MSETAPAETATPAPVEKSPAKKKATKKAAGAGAAKRKATGPPVS. S2 is subject to N-acetylserine; partial. Residue S2 is modified to Phosphoserine. At T11 the chain carries Phosphothreonine; by GSK3. Position 17 is an N6-acetyllysine (K17). S18 carries the phosphoserine modification. K27 carries the post-translational modification N6-methyllysine. Position 37 is an N6-(beta-hydroxybutyryl)lysine; alternate (K37). An N6-succinyllysine; alternate modification is found at K37. T39 bears the Phosphothreonine mark. Residues 39-112 enclose the H15 domain; it reads TGPPVSELIT…GASGSFKLNK (74 aa). An N6-acetyllysine modification is found at K49. K55 is modified (N6-(beta-hydroxybutyryl)lysine). R57 is modified (citrulline). K67 is subject to N6-(beta-hydroxybutyryl)lysine. K78 carries the N6-acetyllysine modification. Residues K88, K93, and K109 each carry the N6-(beta-hydroxybutyryl)lysine modification. The interval 98–226 is disordered; that stretch reads QTKGTGASGS…KAKKAAAKKK (129 aa). The segment covering 122-133 has biased composition (basic residues); that stretch reads KAKKAGAAKAKK. Residues T138 and T155 each carry the phosphothreonine modification. The span at 140–161 shows a compositional bias: basic residues; it reads KKAKKAAGAKKAVKKTPKKAKK. At K168 the chain carries N6-acetyllysine. Positions 169–187 are enriched in basic residues; sequence KVAKSPKKAKAAAKPKKAT. A phosphoserine mark is found at S173 and S189. A compositionally biased stretch (basic residues) spans 194 to 226; it reads KAVKPKAAKPKAAKPKAAKPKAAKAKKAAAKKK.

The protein belongs to the histone H1/H5 family. Interacts with MSX1. H1 histones are progressively phosphorylated during the cell cycle, becoming maximally phosphorylated during late G2 phase and M phase, and being dephosphorylated sharply thereafter. Phosphorylated at Thr-11 by GSK3B during mitosis in prometaphase and dephosphorylated in telophase. In terms of processing, citrullination at Arg-57 (H1R54ci) by PADI4 takes place within the DNA-binding site of H1 and results in its displacement from chromatin and global chromatin decondensation, thereby promoting pluripotency and stem cell maintenance. As to expression, ubiquitous. Expressed in the majority of the cell lines tested and in testis.

It is found in the nucleus. The protein localises to the chromosome. In terms of biological role, histone H1 protein binds to linker DNA between nucleosomes forming the macromolecular structure known as the chromatin fiber. Histones H1 are necessary for the condensation of nucleosome chains into higher-order structured fibers. Also acts as a regulator of individual gene transcription through chromatin remodeling, nucleosome spacing and DNA methylation. The protein is Histone H1.5 of Homo sapiens (Human).